A 492-amino-acid chain; its full sequence is 2-succinylbenzoate--CoA ligase (492 aa).

The protein belongs to the ATP-dependent AMP-binding enzyme family. MenE subfamily.

It catalyses the reaction 2-succinylbenzoate + ATP + CoA = 2-succinylbenzoyl-CoA + AMP + diphosphate. Its pathway is quinol/quinone metabolism; 1,4-dihydroxy-2-naphthoate biosynthesis; 1,4-dihydroxy-2-naphthoate from chorismate: step 5/7. It participates in quinol/quinone metabolism; menaquinone biosynthesis. Converts 2-succinylbenzoate (OSB) to 2-succinylbenzoyl-CoA (OSB-CoA). The protein is 2-succinylbenzoate--CoA ligase of Staphylococcus aureus (strain USA300 / TCH1516).